Here is a 128-residue protein sequence, read N- to C-terminus: Transcription antitermination protein NusB (128 aa).

The protein belongs to the NusB family.

In terms of biological role, involved in transcription antitermination. Required for transcription of ribosomal RNA (rRNA) genes. Binds specifically to the boxA antiterminator sequence of the ribosomal RNA (rrn) operons. This is Transcription antitermination protein NusB from Listeria welshimeri serovar 6b (strain ATCC 35897 / DSM 20650 / CCUG 15529 / CIP 8149 / NCTC 11857 / SLCC 5334 / V8).